The following is a 376-amino-acid chain: MHLLKVGTWRNNTAFSWLIMFGVLWLVSQNCCRASVVWTAYMNISFHVGNHVLSELGETGVFGRSSTLKRVAGVIVPPEGKIQNACNPNTIFSRSKYSETWLALIERGGCTFTQKIKVAAEKGASGVIIYNFPGTGNQVFPMFHQAFEDVVVVMIGNLKGTEIFHLIKKGVLITAMVEVGRKHIIWMNHYLVSFVIVTTATLAYFIFYHIHRLCLARIQNRRWQRLTTDLQNAFGQLQLRVVKEGDEEINPNGDSCVICFEHYKPNDIVRILTCKHFFHKNCIDPWILSHGTCPICKCDILKVLGIQVDVENGTEPLQVLMSSELCETLSPSEEETNNEVSPAGTSDKVIHVEENPTSQNNDSQPHSVVEDVHPSP.

The PA domain occupies 65 to 167 (SSTLKRVAGV…LKGTEIFHLI (103 aa)). The chain crosses the membrane as a helical span at residues 190-210 (YLVSFVIVTTATLAYFIFYHI). Residues 256-297 (CVICFEHYKPNDIVRILTCKHFFHKNCIDPWILSHGTCPICK) form an RING-type; atypical zinc finger. Positions 328–376 (TLSPSEEETNNEVSPAGTSDKVIHVEENPTSQNNDSQPHSVVEDVHPSP) are disordered. Over residues 355–366 (NPTSQNNDSQPH) the composition is skewed to polar residues.

Interacts with E3 ligase UBE2J1. In terms of processing, auto-ubiquitinated.

Its subcellular location is the endoplasmic reticulum membrane. The catalysed reaction is S-ubiquitinyl-[E2 ubiquitin-conjugating enzyme]-L-cysteine + [acceptor protein]-L-lysine = [E2 ubiquitin-conjugating enzyme]-L-cysteine + N(6)-ubiquitinyl-[acceptor protein]-L-lysine.. It participates in protein modification; protein ubiquitination. Its function is as follows. Has E3 ubiquitin-protein ligase activity. Plays a role in male fecundity through the interaction with the E2 ubituitin-protein ligase UBE2J1. The chain is E3 ubiquitin-protein ligase RNF133 (RNF133) from Macaca fascicularis (Crab-eating macaque).